The chain runs to 359 residues: Probable dual-specificity RNA methyltransferase RlmN (359 aa).

The active-site Proton acceptor is glutamate 91. Residues 97-335 enclose the Radical SAM core domain; sequence QHYGHSVCVT…CVVRQEHGTD (239 aa). Cysteine 104 and cysteine 340 are joined by a disulfide. The [4Fe-4S] cluster site is built by cysteine 111, cysteine 115, and cysteine 118. Residues 163–164, serine 195, 218–220, and asparagine 296 contribute to the S-adenosyl-L-methionine site; these read GE and SLH. Cysteine 340 acts as the S-methylcysteine intermediate in catalysis.

This sequence belongs to the radical SAM superfamily. RlmN family. [4Fe-4S] cluster serves as cofactor.

The protein localises to the cytoplasm. The enzyme catalyses adenosine(2503) in 23S rRNA + 2 reduced [2Fe-2S]-[ferredoxin] + 2 S-adenosyl-L-methionine = 2-methyladenosine(2503) in 23S rRNA + 5'-deoxyadenosine + L-methionine + 2 oxidized [2Fe-2S]-[ferredoxin] + S-adenosyl-L-homocysteine. It catalyses the reaction adenosine(37) in tRNA + 2 reduced [2Fe-2S]-[ferredoxin] + 2 S-adenosyl-L-methionine = 2-methyladenosine(37) in tRNA + 5'-deoxyadenosine + L-methionine + 2 oxidized [2Fe-2S]-[ferredoxin] + S-adenosyl-L-homocysteine. Specifically methylates position 2 of adenine 2503 in 23S rRNA and position 2 of adenine 37 in tRNAs. The protein is Probable dual-specificity RNA methyltransferase RlmN of Streptococcus pyogenes serotype M12 (strain MGAS2096).